We begin with the raw amino-acid sequence, 271 residues long: Acetyl-coenzyme A carboxylase carboxyl transferase subunit beta (271 aa).

Residues 21–271 (LWIQCPYCKQ…LGDLLALHTA (251 aa)) form the CoA carboxyltransferase N-terminal domain. Cys-25, Cys-28, Cys-43, and Cys-46 together coordinate Zn(2+). Residues 25–46 (CPYCKQGSYRESLGNAQVCPHC) form a C4-type zinc finger.

This sequence belongs to the AccD/PCCB family. Acetyl-CoA carboxylase is a heterohexamer composed of biotin carboxyl carrier protein (AccB), biotin carboxylase (AccC) and two subunits each of ACCase subunit alpha (AccA) and ACCase subunit beta (AccD). The cofactor is Zn(2+).

It is found in the cytoplasm. The catalysed reaction is N(6)-carboxybiotinyl-L-lysyl-[protein] + acetyl-CoA = N(6)-biotinyl-L-lysyl-[protein] + malonyl-CoA. The protein operates within lipid metabolism; malonyl-CoA biosynthesis; malonyl-CoA from acetyl-CoA: step 1/1. In terms of biological role, component of the acetyl coenzyme A carboxylase (ACC) complex. Biotin carboxylase (BC) catalyzes the carboxylation of biotin on its carrier protein (BCCP) and then the CO(2) group is transferred by the transcarboxylase to acetyl-CoA to form malonyl-CoA. This chain is Acetyl-coenzyme A carboxylase carboxyl transferase subunit beta, found in Lacticaseibacillus casei (strain BL23) (Lactobacillus casei).